A 294-amino-acid polypeptide reads, in one-letter code: F-box protein SKIP3 (294 aa).

The 47-residue stretch at Ser-21–Phe-67 folds into the F-box domain.

In terms of assembly, part of a SCF (SKP1-cullin-F-box) protein ligase complex. Interacts with SKP1A/ASK1.

It participates in protein modification; protein ubiquitination. This chain is F-box protein SKIP3 (SKIP3), found in Arabidopsis thaliana (Mouse-ear cress).